The primary structure comprises 160 residues: Putative transcriptional regulator protein YobU (160 aa).

This chain is Putative transcriptional regulator protein YobU (yobU), found in Bacillus subtilis (strain 168).